Here is a 204-residue protein sequence, read N- to C-terminus: Glycerol-3-phosphate acyltransferase (204 aa).

Transmembrane regions (helical) follow at residues 8-28 (ILIF…CYIF), 53-73 (VLAA…VVIA), 81-101 (FITA…IFFG), 116-136 (FGFS…VAII), and 155-175 (VIFT…IIIL).

It belongs to the PlsY family. In terms of assembly, probably interacts with PlsX.

The protein resides in the cell inner membrane. It carries out the reaction an acyl phosphate + sn-glycerol 3-phosphate = a 1-acyl-sn-glycero-3-phosphate + phosphate. It functions in the pathway lipid metabolism; phospholipid metabolism. Functionally, catalyzes the transfer of an acyl group from acyl-phosphate (acyl-PO(4)) to glycerol-3-phosphate (G3P) to form lysophosphatidic acid (LPA). This enzyme utilizes acyl-phosphate as fatty acyl donor, but not acyl-CoA or acyl-ACP. This chain is Glycerol-3-phosphate acyltransferase, found in Francisella tularensis subsp. holarctica (strain OSU18).